Consider the following 421-residue polypeptide: Nuclear envelope integral membrane protein 2 (421 aa).

The first 22 residues, 1–22 (MPPGSWWLVLWLPPLATLPAGA), serve as a signal peptide directing secretion. Transmembrane regions (helical) follow at residues 147–167 (NVVD…FFYA), 175–195 (VFYY…FVLL), 206–226 (TFGA…CQLM), 232–252 (LWCG…LCSF), and 279–299 (LVLV…MILL).

This sequence belongs to the NEMP family.

It is found in the nucleus inner membrane. The sequence is that of Nuclear envelope integral membrane protein 2 (Nemp2) from Rattus norvegicus (Rat).